A 376-amino-acid polypeptide reads, in one-letter code: Ribonucleoside-diphosphate reductase subunit beta (376 aa).

Residues D85, E116, and H119 each coordinate Fe cation. Residue Y123 is part of the active site. Residues E205, E239, and H242 each coordinate Fe cation.

Belongs to the ribonucleoside diphosphate reductase small chain family. In terms of assembly, tetramer of two alpha and two beta subunits. Fe cation is required as a cofactor.

It catalyses the reaction a 2'-deoxyribonucleoside 5'-diphosphate + [thioredoxin]-disulfide + H2O = a ribonucleoside 5'-diphosphate + [thioredoxin]-dithiol. Provides the precursors necessary for DNA synthesis. Catalyzes the biosynthesis of deoxyribonucleotides from the corresponding ribonucleotides. The sequence is that of Ribonucleoside-diphosphate reductase subunit beta (nrdB) from Haemophilus influenzae (strain ATCC 51907 / DSM 11121 / KW20 / Rd).